Here is a 304-residue protein sequence, read N- to C-terminus: MESLNLKNLTTESRNETTINIDKVSTLEMVKIMNDEDKKVANAVEKELPKIAKAIDMIAERIHRGGRLIYIGAGTSGRLGVLDASECPPTYGVSEELVQGIIAGGKEAIFRAKEGAEDSEELAVEDLKSKNITENDTIIGLAASGRTPYVIGGLRYADQIGALTVSVTCNENSDVAKEAYISIAPVVGPEVVTGSTRLKSGTAQKLVLNMISTGVMIKLGKVYGNLMVDLRATNEKLIERAKGIVCKATGINMEEATEALNKTDYDVKLAIFMMLSKLNKDEARIKLDKNKGYIAKALQEIDNK.

In terms of domain architecture, SIS spans 58 to 221 (IAERIHRGGR…STGVMIKLGK (164 aa)). Glu86 acts as the Proton donor in catalysis. The active site involves Glu117.

This sequence belongs to the GCKR-like family. MurNAc-6-P etherase subfamily. As to quaternary structure, homodimer.

It carries out the reaction N-acetyl-D-muramate 6-phosphate + H2O = N-acetyl-D-glucosamine 6-phosphate + (R)-lactate. It functions in the pathway amino-sugar metabolism; N-acetylmuramate degradation. Functionally, specifically catalyzes the cleavage of the D-lactyl ether substituent of MurNAc 6-phosphate, producing GlcNAc 6-phosphate and D-lactate. This is N-acetylmuramic acid 6-phosphate etherase from Clostridium beijerinckii (strain ATCC 51743 / NCIMB 8052) (Clostridium acetobutylicum).